We begin with the raw amino-acid sequence, 369 residues long: Anhydro-N-acetylmuramic acid kinase (369 aa).

Gly12–Asp19 is an ATP binding site.

This sequence belongs to the anhydro-N-acetylmuramic acid kinase family.

It catalyses the reaction 1,6-anhydro-N-acetyl-beta-muramate + ATP + H2O = N-acetyl-D-muramate 6-phosphate + ADP + H(+). Its pathway is amino-sugar metabolism; 1,6-anhydro-N-acetylmuramate degradation. It participates in cell wall biogenesis; peptidoglycan recycling. In terms of biological role, catalyzes the specific phosphorylation of 1,6-anhydro-N-acetylmuramic acid (anhMurNAc) with the simultaneous cleavage of the 1,6-anhydro ring, generating MurNAc-6-P. Is required for the utilization of anhMurNAc either imported from the medium or derived from its own cell wall murein, and thus plays a role in cell wall recycling. The polypeptide is Anhydro-N-acetylmuramic acid kinase (Shewanella loihica (strain ATCC BAA-1088 / PV-4)).